We begin with the raw amino-acid sequence, 506 residues long: Mitogen-activated protein kinase 13 (506 aa).

A Protein kinase domain is found at 13–304 (YQIQEVVGKG…AEEALADPYF (292 aa)). Residues 19-27 (VGKGSYGVV) and Lys-42 each bind ATP. The active-site Proton acceptor is Asp-139. A Phosphothreonine modification is found at Thr-175. The short motif at 175–177 (TDY) is the TXY element. Tyr-177 is subject to Phosphotyrosine. The disordered stretch occupies residues 384–421 (YSRGERSTPLRRQHASLPRERVCSSVDSNNQDSDNEER).

This sequence belongs to the protein kinase superfamily. CMGC Ser/Thr protein kinase family. MAP kinase subfamily. Dually phosphorylated on Thr-175 and Tyr-177, which activates the enzyme.

The enzyme catalyses L-seryl-[protein] + ATP = O-phospho-L-seryl-[protein] + ADP + H(+). It carries out the reaction L-threonyl-[protein] + ATP = O-phospho-L-threonyl-[protein] + ADP + H(+). Activated by threonine and tyrosine phosphorylation. This Oryza sativa subsp. indica (Rice) protein is Mitogen-activated protein kinase 13 (MPK13).